The following is a 447-amino-acid chain: MREIVHIQAGQCGNQIGAKFWEIISDEHGIDATGAYHGDSDLQLERINVYYNEASGGKYVPRAVLVDLEPGTMDSVRSGPFGQIFRPDNFVFGQSGAGNNWAKGHYTEGAELVDSVLDVVRKEAESCDCLQGFQLTHSLGGGTGSGMGTLLISKIREEYPDRIMNTYSVVPSPKVSDTVVEPYNATLSVHQLVENTDETYCIDNEALYDICFRTLKLTTPTYGDLNHLVSLTMSGVTTCLRFPGQLNADLRKLAVNMVPFPRLHFFMPGFAPLTSRGSQQYRALTVPELTQQMFDAKNMMAACDPRHGRYLTVAAIFRGRMSMKEVDEQMLNIQNKNSSYFVEWIPNNVKTAVCDIPPRGLKMSATFIGNSTAIQELFKRISEQFTAMFRRKAFLHWYTGEGMDEMEFTEAESNMNDLVSEYQQYQEATADEDAEFEEEQEAEVEEN.

GTP-binding residues include Gln-11, Glu-69, Ser-138, Gly-142, Thr-143, Gly-144, Asn-204, and Asn-226. Residue Glu-69 participates in Mg(2+) binding. The segment at 427–447 is disordered; that stretch reads EATADEDAEFEEEQEAEVEEN. A compositionally biased stretch (acidic residues) spans 429–447; the sequence is TADEDAEFEEEQEAEVEEN.

The protein belongs to the tubulin family. In terms of assembly, dimer of alpha and beta chains. A typical microtubule is a hollow water-filled tube with an outer diameter of 25 nm and an inner diameter of 15 nM. Alpha-beta heterodimers associate head-to-tail to form protofilaments running lengthwise along the microtubule wall with the beta-tubulin subunit facing the microtubule plus end conferring a structural polarity. Microtubules usually have 13 protofilaments but different protofilament numbers can be found in some organisms and specialized cells. Requires Mg(2+) as cofactor.

Its subcellular location is the cytoplasm. It localises to the cytoskeleton. Functionally, tubulin is the major constituent of microtubules, a cylinder consisting of laterally associated linear protofilaments composed of alpha- and beta-tubulin heterodimers. Microtubules grow by the addition of GTP-tubulin dimers to the microtubule end, where a stabilizing cap forms. Below the cap, tubulin dimers are in GDP-bound state, owing to GTPase activity of alpha-tubulin. This is Tubulin beta-1 chain from Glossina morsitans morsitans (Savannah tsetse fly).